We begin with the raw amino-acid sequence, 181 residues long: Adenine phosphoribosyltransferase (181 aa).

Belongs to the purine/pyrimidine phosphoribosyltransferase family. Homodimer.

The protein localises to the cytoplasm. It carries out the reaction AMP + diphosphate = 5-phospho-alpha-D-ribose 1-diphosphate + adenine. It participates in purine metabolism; AMP biosynthesis via salvage pathway; AMP from adenine: step 1/1. Functionally, catalyzes a salvage reaction resulting in the formation of AMP, that is energically less costly than de novo synthesis. This is Adenine phosphoribosyltransferase from Acidobacterium capsulatum (strain ATCC 51196 / DSM 11244 / BCRC 80197 / JCM 7670 / NBRC 15755 / NCIMB 13165 / 161).